The primary structure comprises 1023 residues: RTX-I toxin determinant A from serotypes 1/9 (1023 aa).

Helical transmembrane passes span 226–256, 297–326, and 367–406; these read NNLPDLSLAGPGFDAVSGILSVVSASFILSN, STTAATGGLIGSVVALAISPLSFLNVADKF, and INSVLSARSAGVGAAATGSLVGAPVAALVSAITGIISGIL. Hemolysin-type calcium-binding repeat units lie at residues 730–747, 748–765, 766–783, 784–801, 812–829, and 830–847; these read FGSRFTDIFHGAKGDDEI, YGNDGHDILYGDDGNDVI, HGGDGNDHLVGGNGNDRL, IGGKGNNFLNGGDGDDEL, LGGAGNDILYGSDGTNLF, and DGGVGNDKIYGGLGKDIY.

This sequence belongs to the RTX prokaryotic toxin (TC 1.C.11) family. Palmitoylated by ApxIC. The toxin only becomes active when modified.

It is found in the secreted. The protein resides in the host cell membrane. One of the virulence factors of A.pleuropneumoniae, which has a strong hemolytic activity and is cytotoxic for alveolar macrophages and neutrophils. In Actinobacillus pleuropneumoniae (Haemophilus pleuropneumoniae), this protein is RTX-I toxin determinant A from serotypes 1/9 (apxIA).